The primary structure comprises 266 residues: MSNYYAALALTLLAGISTGIGSLLALMVNHTNKKFLTFALGFSAGIMLYVSFVEIMPQSGQTLAEEMPKHAAGWITTAAFFGGMLFIWLIDQLVPNFENPHEMSMIGTMNTAPSEEARLHRMGIFTAAAIAIHNFPEGLAVFFSALSNPDLGVVIAATIALHNIPEGMAVAVPIYFATKSRMKAFSYSFLSGLAEPLGAIIGYALLKPFLSPLVFACVLGGVAGIMVYISLDELLPAAEEYGEHHIAISGLILGMGVMAVSLLMLA.

Helical transmembrane passes span 8–28 (LALTLLAGISTGIGSLLALMV), 35–55 (FLTFALGFSAGIMLYVSFVEI), 70–90 (HAAGWITTAAFFGGMLFIWLI), 123–143 (GIFTAAAIAIHNFPEGLAVFF), 152–172 (GVVIAATIALHNIPEGMAVAV), 185–205 (FSYSFLSGLAEPLGAIIGYAL), 209–229 (FLSPLVFACVLGGVAGIMVYI), and 246–266 (IAISGLILGMGVMAVSLLMLA). Fe(2+) is bound by residues Asn-134 and Glu-137. Zn(2+) contacts are provided by Glu-137 and His-162. Asn-163, Glu-166, and Glu-195 together coordinate Fe(2+). Glu-166 contributes to the Zn(2+) binding site.

Belongs to the ZIP transporter (TC 2.A.5) family. ZupT subfamily.

The protein localises to the cell inner membrane. It catalyses the reaction Zn(2+)(in) = Zn(2+)(out). Functionally, mediates zinc uptake. May also transport other divalent cations. In Chlorobium limicola (strain DSM 245 / NBRC 103803 / 6330), this protein is Zinc transporter ZupT.